A 183-amino-acid polypeptide reads, in one-letter code: Ribosome maturation factor RimM (183 aa).

In terms of domain architecture, PRC barrel spans 102–183 (DDDFYWHQLE…CITVDWDPEF (82 aa)).

Belongs to the RimM family. In terms of assembly, binds ribosomal protein uS19.

Its subcellular location is the cytoplasm. Its function is as follows. An accessory protein needed during the final step in the assembly of 30S ribosomal subunit, possibly for assembly of the head region. Essential for efficient processing of 16S rRNA. May be needed both before and after RbfA during the maturation of 16S rRNA. It has affinity for free ribosomal 30S subunits but not for 70S ribosomes. The sequence is that of Ribosome maturation factor RimM from Saccharophagus degradans (strain 2-40 / ATCC 43961 / DSM 17024).